The sequence spans 191 residues: Pyridoxal 5'-phosphate synthase subunit PdxT (191 aa).

48-50 (GES) serves as a coordination point for L-glutamine. C81 functions as the Nucleophile in the catalytic mechanism. Residues R109 and 136 to 137 (IR) contribute to the L-glutamine site. Active-site charge relay system residues include H172 and E174.

Belongs to the glutaminase PdxT/SNO family. In the presence of PdxS, forms a dodecamer of heterodimers. Only shows activity in the heterodimer.

The catalysed reaction is aldehydo-D-ribose 5-phosphate + D-glyceraldehyde 3-phosphate + L-glutamine = pyridoxal 5'-phosphate + L-glutamate + phosphate + 3 H2O + H(+). It catalyses the reaction L-glutamine + H2O = L-glutamate + NH4(+). It participates in cofactor biosynthesis; pyridoxal 5'-phosphate biosynthesis. In terms of biological role, catalyzes the hydrolysis of glutamine to glutamate and ammonia as part of the biosynthesis of pyridoxal 5'-phosphate. The resulting ammonia molecule is channeled to the active site of PdxS. In Thermus thermophilus (strain ATCC 27634 / DSM 579 / HB8), this protein is Pyridoxal 5'-phosphate synthase subunit PdxT.